Here is a 243-residue protein sequence, read N- to C-terminus: uncharacterized protein (243 aa).

The Bipartite nuclear localization signal signature appears at 207–224 (KKTSISGYKTLDVKRKFV).

This is an uncharacterized protein from Acheta domesticus (House cricket).